Consider the following 238-residue polypeptide: MLHVTFFGHANFLLDDGQTKVLIDPFFTGNPVCPIKADAVSADYILVSHGHGDHLGDAIDIAKGTGATIISSFELASYCQRKGVKAHGMAIGGKRDFPFGRVRLTAAVHGSGIIEGDNYLDVGNPCGFLVNMGGKSVYHAGDTGLTRDMELINMCFLKGGRLDLALLPIGDNFGMGPEDALYATKMLHPRMIVPMHYNTFPVIEQDVAAFKRVVTELTDSECHVLAPGDTLTLNGHGR.

It belongs to the UPF0173 family.

In Heliobacterium modesticaldum (strain ATCC 51547 / Ice1), this protein is UPF0173 metal-dependent hydrolase Helmi_16730.